The sequence spans 144 residues: Ribosome-binding factor A (144 aa).

2 disordered regions span residues 1-22 (MPRH…QLRV) and 125-144 (TPAV…EEEQ). Positions 134–144 (QDPDSDREEEQ) are enriched in acidic residues.

Belongs to the RbfA family. In terms of assembly, monomer. Binds 30S ribosomal subunits, but not 50S ribosomal subunits or 70S ribosomes.

The protein resides in the cytoplasm. Functionally, one of several proteins that assist in the late maturation steps of the functional core of the 30S ribosomal subunit. Associates with free 30S ribosomal subunits (but not with 30S subunits that are part of 70S ribosomes or polysomes). Required for efficient processing of 16S rRNA. May interact with the 5'-terminal helix region of 16S rRNA. This chain is Ribosome-binding factor A, found in Bradyrhizobium diazoefficiens (strain JCM 10833 / BCRC 13528 / IAM 13628 / NBRC 14792 / USDA 110).